The following is a 55-amino-acid chain: MAKKAREKIKMISSAGTGHYYTTTKNKRNTPDKLKLKKYDPVIRKHILYNEGKIK.

This sequence belongs to the bacterial ribosomal protein bL33 family.

The protein is Large ribosomal subunit protein bL33 of Buchnera aphidicola subsp. Acyrthosiphon pisum (strain 5A).